Here is a 225-residue protein sequence, read N- to C-terminus: Small ribosomal subunit protein uS3 (225 aa).

A KH type-2 domain is found at 39–109 (IYRFFNKFTR…ELKLNIEVVN (71 aa)).

The protein belongs to the universal ribosomal protein uS3 family. As to quaternary structure, part of the 30S ribosomal subunit. Forms a tight complex with proteins S10 and S14.

Binds the lower part of the 30S subunit head. Binds mRNA in the 70S ribosome, positioning it for translation. This chain is Small ribosomal subunit protein uS3, found in Mycoplasma mobile (strain ATCC 43663 / 163K / NCTC 11711) (Mesomycoplasma mobile).